Reading from the N-terminus, the 247-residue chain is 2,3-bisphosphoglycerate-dependent phosphoglycerate mutase (247 aa).

Substrate contacts are provided by residues 13 to 20, 26 to 27, R65, 92 to 95, K103, 119 to 120, and 186 to 187; these read RHGESDWN, TG, ERHY, RR, and GN. The Tele-phosphohistidine intermediate role is filled by H14. Residue E92 is the Proton donor/acceptor of the active site.

The protein belongs to the phosphoglycerate mutase family. BPG-dependent PGAM subfamily. As to quaternary structure, homotetramer, dimer of dimers.

The enzyme catalyses (2R)-2-phosphoglycerate = (2R)-3-phosphoglycerate. Its pathway is carbohydrate degradation; glycolysis; pyruvate from D-glyceraldehyde 3-phosphate: step 3/5. Its function is as follows. Catalyzes the interconversion of 2-phosphoglycerate and 3-phosphoglycerate. The chain is 2,3-bisphosphoglycerate-dependent phosphoglycerate mutase from Mycobacterium leprae (strain Br4923).